We begin with the raw amino-acid sequence, 172 residues long: Shikimate kinase (172 aa).

An ATP-binding site is contributed by 11–16 (GAGKST). Residue S15 coordinates Mg(2+). D33, R57, and G79 together coordinate substrate. Residue R117 coordinates ATP. Residue R136 participates in substrate binding. R153 contacts ATP.

It belongs to the shikimate kinase family. In terms of assembly, monomer. The cofactor is Mg(2+).

It localises to the cytoplasm. The catalysed reaction is shikimate + ATP = 3-phosphoshikimate + ADP + H(+). It participates in metabolic intermediate biosynthesis; chorismate biosynthesis; chorismate from D-erythrose 4-phosphate and phosphoenolpyruvate: step 5/7. Its function is as follows. Catalyzes the specific phosphorylation of the 3-hydroxyl group of shikimic acid using ATP as a cosubstrate. The polypeptide is Shikimate kinase (Pseudomonas entomophila (strain L48)).